Consider the following 309-residue polypeptide: Protein phosphatase 1 regulatory subunit 42 (309 aa).

LRR repeat units follow at residues 29–50 (KITH…SLCK), 51–72 (NLSV…NYAT), 73–94 (NLTH…RSLK), 95–116 (KLEK…EGLG), 117–138 (ELRE…LFDP), 147–168 (SLCI…ELLE), and 169–190 (NLNQ…EFLL). Residues 204-242 (NPVCLKPKYRDRLILVSKSLEFLDGKEIKNIERQFLMNW) form the LRRCT domain.

Interacts with PPP1CC isoform gamma-2; the interaction is direct. Interacts with actin, dynein, KIF5B, KIFC1 and tubulin. Associates with microtubules. Post-translationally, phosphorylated; in the testis.

The protein resides in the cytoplasm. Its subcellular location is the cytoskeleton. It localises to the microtubule organizing center. It is found in the centrosome. Regulates phosphatase activity of protein phosphatase 1 (PP1) complexes in the testis. The protein is Protein phosphatase 1 regulatory subunit 42 of Homo sapiens (Human).